The primary structure comprises 316 residues: Arginase-1 (316 aa).

Residues 1-26 (MAKERHSVGVIGAPFSKGQPRRGVEE) are disordered. His101, Asp124, His126, and Asp128 together coordinate Mn(2+). Substrate contacts are provided by residues 126–130 (HADIN), 137–139 (CGN), and Asp183. Residues Asp232 and Asp234 each coordinate Mn(2+). Thr246 lines the substrate pocket.

Belongs to the arginase family. As to quaternary structure, homotrimer. The cofactor is Mn(2+). As to expression, strongest expression in liver.

It carries out the reaction L-arginine + H2O = urea + L-ornithine. The protein operates within nitrogen metabolism; urea cycle; L-ornithine and urea from L-arginine: step 1/1. This is Arginase-1 (arg1) from Xenopus laevis (African clawed frog).